Consider the following 674-residue polypeptide: DNA ligase (674 aa).

NAD(+) contacts are provided by residues 35–39 (DAEYD), 84–85 (SL), and Glu116. Lys118 acts as the N6-AMP-lysine intermediate in catalysis. NAD(+) is bound by residues Arg139, Glu176, Lys293, and Lys317. The Zn(2+) site is built by Cys411, Cys414, Cys429, and Cys435. Positions 593–674 (DGVKPLEGTT…LLALLEEHGV (82 aa)) constitute a BRCT domain.

This sequence belongs to the NAD-dependent DNA ligase family. LigA subfamily. The cofactor is Mg(2+). Mn(2+) is required as a cofactor.

The enzyme catalyses NAD(+) + (deoxyribonucleotide)n-3'-hydroxyl + 5'-phospho-(deoxyribonucleotide)m = (deoxyribonucleotide)n+m + AMP + beta-nicotinamide D-nucleotide.. Its function is as follows. DNA ligase that catalyzes the formation of phosphodiester linkages between 5'-phosphoryl and 3'-hydroxyl groups in double-stranded DNA using NAD as a coenzyme and as the energy source for the reaction. It is essential for DNA replication and repair of damaged DNA. The chain is DNA ligase from Saccharophagus degradans (strain 2-40 / ATCC 43961 / DSM 17024).